The primary structure comprises 465 residues: Cysteine--tRNA ligase (465 aa).

Position 29 (cysteine 29) interacts with Zn(2+). The short motif at proline 31–asparagine 41 is the 'HIGH' region element. Zn(2+) contacts are provided by cysteine 209, histidine 234, and glutamate 238. Residues lysine 266–serine 270 carry the 'KMSKS' region motif. Residue lysine 269 participates in ATP binding. Residue serine 270 is modified to Phosphoserine.

This sequence belongs to the class-I aminoacyl-tRNA synthetase family. As to quaternary structure, monomer. The cofactor is Zn(2+).

The protein resides in the cytoplasm. It catalyses the reaction tRNA(Cys) + L-cysteine + ATP = L-cysteinyl-tRNA(Cys) + AMP + diphosphate. In Bacillus anthracis (strain A0248), this protein is Cysteine--tRNA ligase.